Here is a 331-residue protein sequence, read N- to C-terminus: MEAKELVQRYRNGETLFTGLKLPGINLEAADLIGIVLNEADLRGANLLFCYLNRANLGQANLVAANLSGASLNQADLAGADLRSANFHGAMLQGAILRDSDMTLATLQDTNLIGADLRGADLSGATLTGACLRGANMRQEKKGYYTNLQAAILGRADLQGANMKGVDLSRADLSYANLKEANLRDVDLRKADLSYANLKGALLTDANLSGAKLNGADLQNANLMRAKISEAEMTAVNCQGAIMTHVNLNRTNLTGSNLSFTRMNSADLSRANLTKANLQEAELIEAFFARANLTEANFINANLVRADLMSANMVGADFQGATMPDGQVRHH.

7 Pentapeptide repeat domains span residues 20–59 (LKLP…NLGQ), 60–99 (ANLV…ILRD), 100–139 (SDMT…NMRQ), 151–190 (AILG…DLRK), 191–230 (ADLS…KISE), 231–270 (AEMT…DLSR), and 271–310 (ANLT…DLMS).

This is an uncharacterized protein from Synechocystis sp. (strain ATCC 27184 / PCC 6803 / Kazusa).